A 406-amino-acid polypeptide reads, in one-letter code: Arginine deiminase (406 aa).

The Amidino-cysteine intermediate role is filled by Cys396.

Belongs to the arginine deiminase family.

Its subcellular location is the cytoplasm. The enzyme catalyses L-arginine + H2O = L-citrulline + NH4(+). It functions in the pathway amino-acid degradation; L-arginine degradation via ADI pathway; carbamoyl phosphate from L-arginine: step 1/2. The polypeptide is Arginine deiminase (Aliivibrio fischeri (strain ATCC 700601 / ES114) (Vibrio fischeri)).